Reading from the N-terminus, the 620-residue chain is Glutathione-regulated potassium-efflux system protein KefC (620 aa).

12 helical membrane passes run 4-24, 26-46, 54-74, 90-110, 114-134, 149-169, 178-198, 218-238, 270-290, 294-314, 327-347, and 359-379; these read HTLI…PIAV, LGLG…PWGL, SILH…GLEL, GALQ…LLGL, VAEL…MQAM, FAVL…IPLL, MGAF…VVLL, VFSA…EEVG, GLLL…GTLL, LRIV…LWLI, WFAV…GAAQ, and SLTL…VILN. An RCK N-terminal domain is found at 399-518; that stretch reads QPRVIIAGFG…AGVEKPERET (120 aa). The tract at residues 597 to 620 is disordered; it reads GWQGTEEGKHTGNMADEPETKPSS.

This sequence belongs to the monovalent cation:proton antiporter 2 (CPA2) transporter (TC 2.A.37) family. KefC subfamily. In terms of assembly, homodimer. Interacts with the regulatory subunit KefF.

The protein localises to the cell inner membrane. In terms of biological role, pore-forming subunit of a potassium efflux system that confers protection against electrophiles. Catalyzes K(+)/H(+) antiport. This Escherichia coli O8 (strain IAI1) protein is Glutathione-regulated potassium-efflux system protein KefC.